The following is a 290-amino-acid chain: Shikimate dehydrogenase (NADP(+)) (290 aa).

Residues S20–S22 and T67 each bind shikimate. The active-site Proton acceptor is K71. Shikimate contacts are provided by N92 and D107. NADP(+) is bound by residues G132–A136 and M228. Y230 provides a ligand contact to shikimate. G251 lines the NADP(+) pocket.

It belongs to the shikimate dehydrogenase family. In terms of assembly, homodimer.

The catalysed reaction is shikimate + NADP(+) = 3-dehydroshikimate + NADPH + H(+). It participates in metabolic intermediate biosynthesis; chorismate biosynthesis; chorismate from D-erythrose 4-phosphate and phosphoenolpyruvate: step 4/7. Its function is as follows. Involved in the biosynthesis of the chorismate, which leads to the biosynthesis of aromatic amino acids. Catalyzes the reversible NADPH linked reduction of 3-dehydroshikimate (DHSA) to yield shikimate (SA). The sequence is that of Shikimate dehydrogenase (NADP(+)) from Citrifermentans bemidjiense (strain ATCC BAA-1014 / DSM 16622 / JCM 12645 / Bem) (Geobacter bemidjiensis).